Consider the following 339-residue polypeptide: Uroporphyrinogen decarboxylase (339 aa).

Residues 21–25 (RQAGR), Asp71, Tyr147, Ser202, and His315 each bind substrate.

This sequence belongs to the uroporphyrinogen decarboxylase family. Homodimer.

It localises to the cytoplasm. It catalyses the reaction uroporphyrinogen III + 4 H(+) = coproporphyrinogen III + 4 CO2. The protein operates within porphyrin-containing compound metabolism; protoporphyrin-IX biosynthesis; coproporphyrinogen-III from 5-aminolevulinate: step 4/4. Functionally, catalyzes the decarboxylation of four acetate groups of uroporphyrinogen-III to yield coproporphyrinogen-III. This Helicobacter pylori (strain HPAG1) protein is Uroporphyrinogen decarboxylase.